The primary structure comprises 230 residues: V-type proton ATPase subunit E (230 aa).

The protein belongs to the V-ATPase E subunit family. In terms of assembly, V-ATPase is a heteromultimeric enzyme composed of a peripheral catalytic V1 complex (components A to H) attached to an integral membrane V0 proton pore complex (components: a, c, c', c'', d, e, f and VOA1).

The protein resides in the vacuole membrane. Functionally, subunit of the V1 complex of vacuolar(H+)-ATPase (V-ATPase), a multisubunit enzyme composed of a peripheral complex (V1) that hydrolyzes ATP and a membrane integral complex (V0) that translocates protons. V-ATPase is responsible for acidifying and maintaining the pH of intracellular compartments. The sequence is that of V-type proton ATPase subunit E from Neurospora crassa (strain ATCC 24698 / 74-OR23-1A / CBS 708.71 / DSM 1257 / FGSC 987).